Here is a 307-residue protein sequence, read N- to C-terminus: Putative S-adenosyl-L-methionine-dependent methyltransferase Mflv_5025 (307 aa).

Residues Asp-130 and 159–160 (DL) each bind S-adenosyl-L-methionine.

Belongs to the UPF0677 family.

Its function is as follows. Exhibits S-adenosyl-L-methionine-dependent methyltransferase activity. The sequence is that of Putative S-adenosyl-L-methionine-dependent methyltransferase Mflv_5025 from Mycolicibacterium gilvum (strain PYR-GCK) (Mycobacterium gilvum (strain PYR-GCK)).